The primary structure comprises 144 residues: Putative pre-16S rRNA nuclease (144 aa).

It belongs to the YqgF nuclease family.

It localises to the cytoplasm. Its function is as follows. Could be a nuclease involved in processing of the 5'-end of pre-16S rRNA. The chain is Putative pre-16S rRNA nuclease from Pseudomonas paraeruginosa (strain DSM 24068 / PA7) (Pseudomonas aeruginosa (strain PA7)).